Reading from the N-terminus, the 329-residue chain is MVSSFSVPMPVKRIFDTFPLQTYAAQTDKDEAVALEIQRRSYTFTERGGGSSELTVEGTYKLGVYNVFLEANTGAALATDPWCLFVQLALCQKNGLVLPTHSQEQTPSHTCNHEMLVLSRLSNPDEALPILVEGYKKRIIRSTVAISEIMRSRILDDAEQLMYYTLLDTVLYDCWITQIIFCASDAQFMELYSCQKLSGSIVTPLDVENSLLQKLSAKSLKISLTKRNKFQFRHREIVKSMQGVYHNHHNSVNQEQVLNVLFENSKQVLLGLKDMLKSDGQPTYLHLKIASYILCITNVKEPIKLKTFVENECKELVQFAQDTLKNFVQ.

In terms of assembly, component of the mitochondrial outer membrane sorting assembly machinery (SAM or TOB) complex, which at least consists of SAM35, SAM37 and SAM50.

The protein localises to the mitochondrion outer membrane. Essential component of the mitochondrial outer membrane sorting assembly machinery (SAM or TOB) complex, which is required for the sorting of proteins with complicated topology, such as beta-barrel proteins, to the mitochondrial outer membrane after import by the TOM complex. In Saccharomyces cerevisiae (strain ATCC 204508 / S288c) (Baker's yeast), this protein is Sorting assembly machinery 35 kDa subunit (SAM35).